Consider the following 360-residue polypeptide: Phosphoserine aminotransferase (360 aa).

R41 is an L-glutamate binding site. W101, T152, D172, and Q195 together coordinate pyridoxal 5'-phosphate. An N6-(pyridoxal phosphate)lysine modification is found at K196. Pyridoxal 5'-phosphate is bound at residue 237 to 238 (NT).

The protein belongs to the class-V pyridoxal-phosphate-dependent aminotransferase family. SerC subfamily. Homodimer. Pyridoxal 5'-phosphate is required as a cofactor.

The protein localises to the cytoplasm. It carries out the reaction O-phospho-L-serine + 2-oxoglutarate = 3-phosphooxypyruvate + L-glutamate. The catalysed reaction is 4-(phosphooxy)-L-threonine + 2-oxoglutarate = (R)-3-hydroxy-2-oxo-4-phosphooxybutanoate + L-glutamate. It participates in amino-acid biosynthesis; L-serine biosynthesis; L-serine from 3-phospho-D-glycerate: step 2/3. It functions in the pathway cofactor biosynthesis; pyridoxine 5'-phosphate biosynthesis; pyridoxine 5'-phosphate from D-erythrose 4-phosphate: step 3/5. Functionally, catalyzes the reversible conversion of 3-phosphohydroxypyruvate to phosphoserine and of 3-hydroxy-2-oxo-4-phosphonooxybutanoate to phosphohydroxythreonine. The sequence is that of Phosphoserine aminotransferase from Burkholderia ambifaria (strain ATCC BAA-244 / DSM 16087 / CCUG 44356 / LMG 19182 / AMMD) (Burkholderia cepacia (strain AMMD)).